A 201-amino-acid polypeptide reads, in one-letter code: Small ribosomal subunit protein uS4c (201 aa).

The disordered stretch occupies residues 16 to 43 (GALPGLTSKKPRSASDLRNQSRSGKRSQ). The region spanning 89 to 169 (MRLDNILFRL…LPKHLTLHSF (81 aa)) is the S4 RNA-binding domain.

The protein belongs to the universal ribosomal protein uS4 family. In terms of assembly, part of the 30S ribosomal subunit. Contacts protein S5. The interaction surface between S4 and S5 is involved in control of translational fidelity.

The protein localises to the plastid. It is found in the chloroplast. One of the primary rRNA binding proteins, it binds directly to 16S rRNA where it nucleates assembly of the body of the 30S subunit. Its function is as follows. With S5 and S12 plays an important role in translational accuracy. The chain is Small ribosomal subunit protein uS4c (rps4) from Nymphaea alba (White water-lily).